Consider the following 440-residue polypeptide: Alpha-methylserine aldolase (440 aa).

An N6-(pyridoxal phosphate)lysine modification is found at K255.

It belongs to the SHMT family. Alpha-methylserine aldolase subfamily. Homodimer. Pyridoxal 5'-phosphate serves as cofactor.

It carries out the reaction 2-methyl-L-serine = formaldehyde + L-alanine. In terms of biological role, catalyzes the reversible interconversion of alpha-methyl-L-serine to L-alanine and formaldehyde. The protein is Alpha-methylserine aldolase of Variovorax paradoxus.